A 395-amino-acid polypeptide reads, in one-letter code: MKAGQQGRSCGLISPYLAPKNQSERFAFIAEWYDPNASLLRRYELLYYPVDGSVEMHDVKNRRTFLKRTKYEDLRVEDLFIGNKVNVFSRQLVLIDYGDQYTARQLGSRKEKTLALIKPDAVSKAGEIIEMINKSGFTITKLRMMTLSRKEAADFHVDHHSRPFYNELIQFITSGPVIAMEILRDDAICEWKRLLGPANSGIARSEAPGSVRALFGTDGIRNAAHGSDTFESAAREMELFFPSSGGCGPANTAKFTNCTCCIIKPHAISEGMLGKILIAIRDACFEISAIQMFNMDRANVEEFYEVYKGVVSEYNDMVTELYSGPCVAIEIQQSNPTKTFREFCGPSDPEIARHLRPETLRANFGKTKVQNAVHCTDLPEDGLLEVQYFFKILDN.

Residues 22-110 (QSERFAFIAE…YTARQLGSRK (89 aa)) enclose the DM10 domain.

It belongs to the NDK family. In terms of assembly, component of sperm flagellar doublet microtubules. Component of the gamma-tubulin ring complex. In terms of tissue distribution, widely expressed. Expressed in the flagellum of epididymal sperm but not in testicular sperm (at protein level).

It is found in the cytoplasm. It localises to the cytoskeleton. Its subcellular location is the microtubule organizing center. The protein localises to the centrosome. The protein resides in the nucleus. It is found in the spindle. It localises to the cilium axoneme. Its subcellular location is the flagellum axoneme. The protein localises to the cell projection. The protein resides in the cilium. Possesses an intrinsic kinase activity. Displays 3'-5' exonuclease activity with a preference for single-stranded DNA. Does not seem to have nucleoside diphosphate kinase activity. Functional component of the gamma-tubulin ring complex, implicated in the regulation of the microtubule-nucleating activity of the gamma-tubulin ring complex in centrosomes, in a kinase activity-dependent manner. Part of the dynein-decorated doublet microtubules (DMTs) in cilia axoneme, which is required for motile cilia beating. This is Nucleoside diphosphate kinase homolog 7 (Nme7) from Rattus norvegicus (Rat).